Here is a 222-residue protein sequence, read N- to C-terminus: Sugar fermentation stimulation protein homolog (222 aa).

Belongs to the SfsA family.

The protein is Sugar fermentation stimulation protein homolog of Thermotoga maritima (strain ATCC 43589 / DSM 3109 / JCM 10099 / NBRC 100826 / MSB8).